A 464-amino-acid polypeptide reads, in one-letter code: Soluble pyridine nucleotide transhydrogenase (464 aa).

Residue 35–44 coordinates FAD; sequence DNRPLVGGNC.

It belongs to the class-I pyridine nucleotide-disulfide oxidoreductase family. Requires FAD as cofactor.

The protein resides in the cytoplasm. It carries out the reaction NAD(+) + NADPH = NADH + NADP(+). Functionally, conversion of NADPH, generated by peripheral catabolic pathways, to NADH, which can enter the respiratory chain for energy generation. The sequence is that of Soluble pyridine nucleotide transhydrogenase from Stutzerimonas stutzeri (strain A1501) (Pseudomonas stutzeri).